Consider the following 343-residue polypeptide: Zinc finger protein STP3 (343 aa).

2 disordered regions span residues 31-56 (YNGE…SGSA) and 71-140 (SNDV…KPRK). Polar residues predominate over residues 33 to 45 (GEASSASTHPTLP). Composition is skewed to low complexity over residues 46–56 (NMNISNGSGSA), 71–86 (SNDV…FLPS), and 94–120 (SASA…AGPS). Residues serine 71 and serine 111 each carry the phosphoserine modification. The C2H2-type zinc-finger motif lies at 169-191 (HKCPICHRGFARNNDLLRHKKRH). A disordered region spans residues 198–222 (SQSGVLSNHNDGKGGSVSPNDDDTH).

It localises to the nucleus. This Saccharomyces cerevisiae (strain ATCC 204508 / S288c) (Baker's yeast) protein is Zinc finger protein STP3 (STP3).